The following is a 142-amino-acid chain: MFKHNEQQPEGFQISLKEALDNLAFNDAGLVAAIAQQHDSGEVLMMAWMNREAIEETLATGRVCYFSRSRGKLWRKGESSGQVQTLKELRIDCDGDALLVKVDQTGSACHTGRRDCFYWKADANNVTIDKAPIKDPKELYGK.

Mg(2+) is bound at residue D92. Zn(2+) is bound at residue C93. The Mg(2+) site is built by D94 and D96. Residues C109 and C116 each coordinate Zn(2+).

Belongs to the PRA-CH family. Homodimer. Mg(2+) is required as a cofactor. Requires Zn(2+) as cofactor.

It localises to the cytoplasm. The enzyme catalyses 1-(5-phospho-beta-D-ribosyl)-5'-AMP + H2O = 1-(5-phospho-beta-D-ribosyl)-5-[(5-phospho-beta-D-ribosylamino)methylideneamino]imidazole-4-carboxamide. Its pathway is amino-acid biosynthesis; L-histidine biosynthesis; L-histidine from 5-phospho-alpha-D-ribose 1-diphosphate: step 3/9. Its function is as follows. Catalyzes the hydrolysis of the adenine ring of phosphoribosyl-AMP. This Alcanivorax borkumensis (strain ATCC 700651 / DSM 11573 / NCIMB 13689 / SK2) protein is Phosphoribosyl-AMP cyclohydrolase.